The chain runs to 303 residues: Protein translocase subunit SecF (303 aa).

A run of 6 helical transmembrane segments spans residues 28–48 (SIILSLISFIWIGMYKFNFGI), 140–160 (IEAGTMAMLFSFAAIMIYIWV), 164–184 (WYFGLGILIALVHDVILALGF), 194–214 (LSTIAAVLTIIGYSVNDSVVI), 246–266 (ILTVVTTLLANLALVLFGGEA), and 272–292 (VLVFFGIIAGTYSSIFISAPI).

The protein belongs to the SecD/SecF family. SecF subfamily. In terms of assembly, forms a complex with SecD. Part of the essential Sec protein translocation apparatus which comprises SecA, SecYEG and auxiliary proteins SecDF-YajC and YidC.

It localises to the cell inner membrane. Functionally, part of the Sec protein translocase complex. Interacts with the SecYEG preprotein conducting channel. SecDF uses the proton motive force (PMF) to complete protein translocation after the ATP-dependent function of SecA. This is Protein translocase subunit SecF from Rickettsia bellii (strain OSU 85-389).